Consider the following 360-residue polypeptide: Thiol protease SEN102 (360 aa).

Residues 1-20 (MAKPKFIALALVALSFLSIA) form the signal peptide. Residues 21–133 (QSIPFTEKDL…ENVGSLPAAS (113 aa)) constitute a propeptide, activation peptide. 3 cysteine pairs are disulfide-bonded: Cys151/Cys193, Cys185/Cys225, and Cys283/Cys335. Cys154 is a catalytic residue. Active-site residues include His289 and Asn310. A glycan (N-linked (GlcNAc...) asparagine) is linked at Asn353. The Prevents secretion from ER motif lies at 357-360 (RDEL).

Belongs to the peptidase C1 family.

It localises to the endoplasmic reticulum lumen. This is Thiol protease SEN102 (SEN102) from Hemerocallis sp. (Daylily).